Here is a 486-residue protein sequence, read N- to C-terminus: MLELKDPSLLKQQAFIDGLWVSADSGETFAVTNPATGDELARIPQMGAAEAERAVLAAHRAFKPWKRKTAKERAELLQRWYALMLENQEDLARLLTAEQGKPLAEAHGELGNGMSFVQWFAEEAKRVYGDTIPQPSADKRLIVTKEPIGVTAAITPWNFPHAMITRKVAPALAAGCSMVLRPASQTPLSALALVALAERAGIPAGVFSVVTGSATQIGSVLTGHPLVRKFSFTGSTPVGKLLIGQCAETVKKVSMELGGNAPFIVFDDADLDLAVEGAMLSKFRNAGQTCVCANRIYVQDGIYERFAEKLAAAASGLRLGNGVEAGVTQGPMIDENAVRKVEEHISDALEKGARLIAGGQRHALGGSFFEPTVLTEVTAQMKVAHEETFGPLAPLFRFSSEDEVVELANATEFGLASYFYSRDIGRVLRVSEDLEYGMVGVNTAAIANEMAPFGGVKQSGLGREGSRYGIEDYLEIKYVCLGGVDR.

Residues 157 to 158 (WN), 181 to 184 (RPAS), and 234 to 235 (GS) contribute to the NADP(+) site. Catalysis depends on Glu256, which acts as the Proton acceptor. Leu257 lines the NADP(+) pocket. Cys290 serves as the catalytic Nucleophile. Position 387 (Glu387) interacts with NADP(+).

It belongs to the aldehyde dehydrogenase family.

It catalyses the reaction (2S)-3-sulfolactaldehyde + NADP(+) + H2O = (2S)-3-sulfolactate + NADPH + 2 H(+). The catalysed reaction is (2S)-3-sulfolactaldehyde + NAD(+) + H2O = (2S)-3-sulfolactate + NADH + 2 H(+). In terms of biological role, catalyzes the oxidation of (2S)-3-sulfolactaldehyde to (2S)-3-sulfolactate, using both NAD(+) and NADP(+) as electron acceptors. Is involved in a degradation pathway of sulfoquinovose (SQ) that allows P.putida SQ1 to use SQ as the sole carbon and energy source for growth. The chain is 3-sulfolactaldehyde dehydrogenase from Pseudomonas putida (Arthrobacter siderocapsulatus).